The primary structure comprises 460 residues: uncharacterized protein (460 aa).

One can recognise a TRAM domain in the interval 6 to 64 (PVKKNNDYEIYIDDFGNMGEGIGKIDNFTVFVKDAVKGEKVRAKIIKVNKSFAIGKLID). Cys-77, Cys-83, Cys-86, and Cys-166 together coordinate [4Fe-4S] cluster. Residues Gln-290, Tyr-319, Glu-340, and Asp-388 each contribute to the S-adenosyl-L-methionine site. Residue Cys-415 is the Nucleophile of the active site.

Belongs to the class I-like SAM-binding methyltransferase superfamily. RNA M5U methyltransferase family.

This is an uncharacterized protein from Clostridium acetobutylicum (strain ATCC 824 / DSM 792 / JCM 1419 / IAM 19013 / LMG 5710 / NBRC 13948 / NRRL B-527 / VKM B-1787 / 2291 / W).